Here is a 225-residue protein sequence, read N- to C-terminus: Pathogenesis-related thaumatin-like protein 3.8 (225 aa).

Residues 1-26 (MAKVSDLALLLVAGMAISLYIQETGA) form the signal peptide. 8 disulfide bridges follow: C35–C224, C76–C86, C91–C97, C139–C213, C144–C197, C152–C162, C166–C175, and C176–C184. N188 carries an N-linked (GlcNAc...) asparagine glycan.

The protein belongs to the thaumatin family.

Functionally, may be involved in disease resistance. The sequence is that of Pathogenesis-related thaumatin-like protein 3.8 from Cryptomeria japonica (Japanese cedar).